Here is a 196-residue protein sequence, read N- to C-terminus: NADH dehydrogenase [ubiquinone] 1 alpha subcomplex assembly factor 3 (196 aa).

The transit peptide at 1–93 directs the protein to the mitochondrion; sequence MIARTLRTVG…RSVLSWNVNS (93 aa).

The protein belongs to the NDUFAF3 family. In terms of assembly, together with NdufAF4 associates with mitochondrial complex I assembly intermediates during its biogenesis.

The protein localises to the mitochondrion. Functionally, involved in the assembly of mitochondrial NADH:ubiquinone oxidoreductase complex (complex I). Together with NdufAF4, involved in biogenesis of complex 1 modules N, Q and P-peripheral, but not the P-distal module. Required for recruitment of the complex I assembly factor Timmdc1 to complex 1 assembly intermediates. The polypeptide is NADH dehydrogenase [ubiquinone] 1 alpha subcomplex assembly factor 3 (Drosophila melanogaster (Fruit fly)).